Consider the following 241-residue polypeptide: Alkylated DNA repair protein ALKBH6 homolog (241 aa).

One can recognise a Fe2OG dioxygenase domain in the interval 87 to 232 (AINHVLINEY…RVSLTCRLVP (146 aa)). Fe cation is bound by residues histidine 105, aspartate 107, and histidine 181. Arginine 223 and arginine 229 together coordinate 2-oxoglutarate.

The protein belongs to the alkB family. Requires Fe(2+) as cofactor.

It is found in the nucleus. In terms of biological role, probable RNA demethylase that binds to both N6-methyladenosine-containing- (m(6)A) and C5-methylcytidine-containing- (m(5)C) RNAs, thus being a probable m(6)A and m(5)C eraser. Involved in responses to abscisic acid (ABA) via the modulation of the expression of ABA signaling-related genes (e.g. ABI3 and ABI4). Acts as a negative regulator during seed germination under abiotic stresses (e.g. salt, cold and ABA). Positive modulator of seedling growth and survival in response to drought and heat, but counteracts tolerance to salt. This Arabidopsis thaliana (Mouse-ear cress) protein is Alkylated DNA repair protein ALKBH6 homolog.